The primary structure comprises 529 residues: RE1-silencing transcription factor B (529 aa).

The segment at 156-178 adopts a C2H2-type 1 zinc-finger fold; it reads FRCKPCQYKAESEEEFVHHIKIH. The segment at 188–210 is disordered; the sequence is SNKKAQGNEADSSISEESDVSKG. C2H2-type zinc fingers lie at residues 212 to 234, 244 to 266, 272 to 294, 300 to 322, 328 to 351, 357 to 379, and 385 to 408; these read IQCD…LKHH, YKCT…LRNH, YTCS…IRTH, YQCI…MRTH, FKCE…RQVH, LTCP…VELH, and FLCP…KSRH. The interval 484-529 is disordered; sequence LSSTQKKIKTSDARPEKILDKSRKSSCVKRKSDLLENSNDTQTSTV. Residues 492–506 are compositionally biased toward basic and acidic residues; the sequence is KTSDARPEKILDKSR. The span at 518–529 shows a compositional bias: polar residues; that stretch reads LENSNDTQTSTV.

It is found in the nucleus. The protein localises to the cytoplasm. Functionally, transcriptional repressor which binds neuron-restrictive silencer element (NRSE) and represses neuronal gene transcription in non-neuronal cells. Plays a role in the early development of the nervous system and is required for proper patterning of the neuroectoderm during gastrulation. This involves the correct speciation of the neuroepithelial domain and adequate development of the non-neural ectoderm. This chain is RE1-silencing transcription factor B (rest-b), found in Xenopus laevis (African clawed frog).